The chain runs to 151 residues: MGTDDLGKGEKILNGFQINWMILRDADTGKIIWQENKDFSCPDVEHEAKVPVKILSLRAVSREINFSTVEAMENFRLDQKVLFKGRIMEEWFFEMGWVSPNTTNTWQSTIEAAPESQMMPAKVLNGNVTIETSFYDGDTLISKSVVRLYYI.

It belongs to the PDE6D/unc-119 family. As to quaternary structure, interacts with Pde6.

The protein localises to the nucleus. It is found in the cytoplasm. The polypeptide is Probable cGMP 3',5'-cyclic phosphodiesterase subunit delta (Anopheles gambiae (African malaria mosquito)).